Consider the following 729-residue polypeptide: Transketolase (729 aa).

His97 lines the substrate pocket. Thiamine diphosphate-binding positions include His138 and 186–188 (GPL). Position 227 (Asp227) interacts with Mg(2+). Residues Gly228 and Asn257 each coordinate thiamine diphosphate. Positions 257 and 259 each coordinate Mg(2+). His332, Arg423, and Ser450 together coordinate substrate. Thiamine diphosphate is bound at residue His332. Glu477 functions as the Proton donor in the catalytic mechanism. Phe503 serves as a coordination point for thiamine diphosphate. Substrate is bound by residues His527, Asp535, and Arg586.

Belongs to the transketolase family. As to quaternary structure, homodimer. Mg(2+) serves as cofactor. It depends on Ca(2+) as a cofactor. The cofactor is Mn(2+). Requires Co(2+) as cofactor. Thiamine diphosphate is required as a cofactor.

It catalyses the reaction D-sedoheptulose 7-phosphate + D-glyceraldehyde 3-phosphate = aldehydo-D-ribose 5-phosphate + D-xylulose 5-phosphate. Catalyzes the transfer of a two-carbon ketol group from a ketose donor to an aldose acceptor, via a covalent intermediate with the cofactor thiamine pyrophosphate. In Streptococcus pyogenes serotype M6 (strain ATCC BAA-946 / MGAS10394), this protein is Transketolase.